Here is a 222-residue protein sequence, read N- to C-terminus: Tegument protein UL26 (222 aa).

The protein belongs to the herpesviridae US22 family. As to quaternary structure, interacts with UL25. Interacts with ISGylation machinery components ISG15, UBA7 and HERC5; these interactions inhibit global protein ISGylation. In terms of processing, ISGylated; ISGylation regulates UL26 stability and inhibits its activities to suppress NF-kappa-B signaling.

The protein resides in the virion tegument. It localises to the host nucleus. Its function is as follows. Plays a role in the inhibition of host NF-kappa-B. This inhibition affects both the canonical and the non-canonical pathways. Blocks the induction of host IKK phosphorylation. May also influence the normal phosphorylation state of several tegument proteins including pp28 in virions. Also suppresses virus-induced ISGylation independent of its own ISGylation. In Homo sapiens (Human), this protein is Tegument protein UL26 (UL26).